The primary structure comprises 173 residues: Translation initiation factor IF-3 (173 aa).

The protein belongs to the IF-3 family. Monomer.

It is found in the cytoplasm. In terms of biological role, IF-3 binds to the 30S ribosomal subunit and shifts the equilibrium between 70S ribosomes and their 50S and 30S subunits in favor of the free subunits, thus enhancing the availability of 30S subunits on which protein synthesis initiation begins. The sequence is that of Translation initiation factor IF-3 from Ehrlichia chaffeensis (strain ATCC CRL-10679 / Arkansas).